The chain runs to 158 residues: Small ribosomal subunit protein uS7 (158 aa).

The protein belongs to the universal ribosomal protein uS7 family. Part of the 30S ribosomal subunit. Contacts proteins S9 and S11.

Its function is as follows. One of the primary rRNA binding proteins, it binds directly to 16S rRNA where it nucleates assembly of the head domain of the 30S subunit. Is located at the subunit interface close to the decoding center, probably blocks exit of the E-site tRNA. In Porphyromonas gingivalis (strain ATCC BAA-308 / W83), this protein is Small ribosomal subunit protein uS7.